The following is a 532-amino-acid chain: 2-isopropylmalate synthase (532 aa).

Residues 5–267 (VIIFDTTLRD…HTNINHQEIY (263 aa)) form the Pyruvate carboxyltransferase domain. Mn(2+) contacts are provided by aspartate 14, histidine 202, histidine 204, and asparagine 238. A regulatory domain region spans residues 392–532 (HLDYFSVQSG…SKQQNSQETV (141 aa)). Residues 513-532 (QQHNNQQQNDSKQQNSQETV) form a disordered region.

The protein belongs to the alpha-IPM synthase/homocitrate synthase family. LeuA type 1 subfamily. As to quaternary structure, homodimer. Mn(2+) serves as cofactor.

The protein resides in the cytoplasm. It carries out the reaction 3-methyl-2-oxobutanoate + acetyl-CoA + H2O = (2S)-2-isopropylmalate + CoA + H(+). Its pathway is amino-acid biosynthesis; L-leucine biosynthesis; L-leucine from 3-methyl-2-oxobutanoate: step 1/4. In terms of biological role, catalyzes the condensation of the acetyl group of acetyl-CoA with 3-methyl-2-oxobutanoate (2-ketoisovalerate) to form 3-carboxy-3-hydroxy-4-methylpentanoate (2-isopropylmalate). The sequence is that of 2-isopropylmalate synthase from Pectobacterium atrosepticum (strain SCRI 1043 / ATCC BAA-672) (Erwinia carotovora subsp. atroseptica).